The sequence spans 263 residues: Shikimate dehydrogenase (NADP(+)) (263 aa).

Residues 14 to 16 and Thr60 contribute to the shikimate site; that span reads SLS. Lys64 functions as the Proton acceptor in the catalytic mechanism. Shikimate-binding residues include Asn85 and Asp100. Residues 123-127, 146-151, and Leu205 each bind NADP(+); these read GAGGA and NRTPQR. Tyr207 serves as a coordination point for shikimate. Gly228 is a binding site for NADP(+).

This sequence belongs to the shikimate dehydrogenase family. As to quaternary structure, homodimer.

The enzyme catalyses shikimate + NADP(+) = 3-dehydroshikimate + NADPH + H(+). It participates in metabolic intermediate biosynthesis; chorismate biosynthesis; chorismate from D-erythrose 4-phosphate and phosphoenolpyruvate: step 4/7. Its function is as follows. Involved in the biosynthesis of the chorismate, which leads to the biosynthesis of aromatic amino acids. Catalyzes the reversible NADPH linked reduction of 3-dehydroshikimate (DHSA) to yield shikimate (SA). The chain is Shikimate dehydrogenase (NADP(+)) from Thermus thermophilus (strain ATCC BAA-163 / DSM 7039 / HB27).